Here is a 423-residue protein sequence, read N- to C-terminus: MNILLVGSGGREHALAWKIAASPLVKRLVAAPGNPGMAEQCELRAVGPTDVPALVALAKEIAADLVVIGPESSVDAGLADQLQAEGIPCFGPTAGAGQLESSKAFTKAFADRYGLPTAAYRVCESAEAARAALELFEPPYVIKADGLAAGKGVTVAQDRGEAEAAIDDAFGGRFGAAGARVVVEEFLEGEIGSLFALCDGEASMLFGWAQDHKRVFDGEQGPNTGGMGTYSPAPVFTPELVEQVRTRLVEPAFAGIAADGSPYRGVLFVELMATKHGPKLVEFNVRFGDPECQVLMLRLESDLVPYLVACANGTLGDMPPPVWRDEAAVCVVIAAKGYPGTPAAGGEIRGLDQDLGDDVVVFHAGTKRDADGTLRAAGGRVLNVCARGADLRTARDRAYAAIERIEFADGFCRSDIGWRALGR.

The ATP-grasp domain occupies 107-312 (KAFADRYGLP…LVPYLVACAN (206 aa)). 133-193 (LELFEPPYVI…EEFLEGEIGS (61 aa)) is an ATP binding site. Mg(2+) is bound by residues E270, E282, and N284. Mn(2+)-binding residues include E270, E282, and N284.

The protein belongs to the GARS family. Mg(2+) serves as cofactor. Requires Mn(2+) as cofactor.

The catalysed reaction is 5-phospho-beta-D-ribosylamine + glycine + ATP = N(1)-(5-phospho-beta-D-ribosyl)glycinamide + ADP + phosphate + H(+). Its pathway is purine metabolism; IMP biosynthesis via de novo pathway; N(1)-(5-phospho-D-ribosyl)glycinamide from 5-phospho-alpha-D-ribose 1-diphosphate: step 2/2. The protein is Phosphoribosylamine--glycine ligase of Phenylobacterium zucineum (strain HLK1).